The primary structure comprises 238 residues: MKLTPKELDKLMLHYAGELAKKRKERGIKLNYVEAVALISAHVMEEARAGKKSAAELMQEGRTLLKPDDVMDGVASMIHEVGIEAMFPDGTKLVTVHTPIESKGKLVPGELFLKNEDITINEGKQAISVKVKNVGDRPVQIGSHFHFFEVNRCLDFDREKAFGKRLDIASGTAVRFEPGEEKSVELIDIGGNRRIFGFNALVDRQADNESKKIALHRAKERGFHGAKSDDNYVKTIKE.

Positions 1–102 (MKLTPKELDK…LVTVHTPIES (102 aa)) are urease gamma. The segment at 103-238 (KGKLVPGELF…DDNYVKTIKE (136 aa)) is urease beta.

The protein in the N-terminal section; belongs to the urease gamma subunit family. This sequence in the C-terminal section; belongs to the urease beta subunit family. In terms of assembly, heterohexamer of 3 UreA (alpha) and 3 UreB (beta) subunits.

The protein localises to the cytoplasm. The enzyme catalyses urea + 2 H2O + H(+) = hydrogencarbonate + 2 NH4(+). The protein operates within nitrogen metabolism; urea degradation; CO(2) and NH(3) from urea (urease route): step 1/1. The sequence is that of Urease subunit alpha from Helicobacter acinonychis (strain Sheeba).